Here is a 370-residue protein sequence, read N- to C-terminus: Cyclic AMP-responsive element-binding protein 3-like protein 4 (370 aa).

Residues 1 to 55 (MELGCPELLEPPEDIFSTGSFLELGFNGPASKVPVTRGLQKSEPDDFLNLFIDPN) are required for transcriptional activation. The Cytoplasmic portion of the chain corresponds to 1–271 (MELGCPELLE…QTSSRAAQTS (271 aa)). The segment at 61-85 (ETSPGRDSGVSEDPGSPAQQASSSP) is disordered. Over residues 76-85 (SPAQQASSSP) the composition is skewed to low complexity. One can recognise a bZIP domain in the interval 193–256 (ILKKIRRKIR…IFLMEQVRQL (64 aa)). The interval 195-234 (KKIRRKIRNKQSAQDSRRRKKEYLDGLESRVAACSEQNQK) is basic motif. The segment at 235-256 (LQRKVQELERQNIFLMEQVRQL) is leucine-zipper. Residues 272–292 (TCVLILLFSLALIILPSFSPF) traverse the membrane as a helical; Signal-anchor for type II membrane protein segment. The Lumenal segment spans residues 293 to 370 (QGQSEARPED…IRGMVHTDEM (78 aa)). N318 and N342 each carry an N-linked (GlcNAc...) asparagine glycan.

This sequence belongs to the bZIP family. ATF subfamily. In terms of assembly, binds DNA as a dimer. Forms a heterodimer with CREM isoform Tau. Post-translationally, controlled by regulated intramembrane proteolysis (RIP). Following ER stress a fragment containing the cytoplasmic transcription factor domain is released by proteolysis. The cleavage seems to be performed sequentially by site-1 and site-2 proteases (PS1 and PS2). PS1 cleavage may be suppressed by a determinant in the C-terminal region. As to expression, predominantly expressed at high levels in testis with isoform 2 being the predominant isoform. Specifically expressed in postmeiotic spermatids and accumulates in the mid/late stage (at protein level). Ubiquitously expressed at low levels.

The protein resides in the endoplasmic reticulum membrane. The protein localises to the cytoplasmic vesicle. It is found in the secretory vesicle. It localises to the acrosome inner membrane. Its subcellular location is the nucleus. Its function is as follows. Transcriptional activator that may play a role in the unfolded protein response of the testis. Proposed to be involved in spermiogenesis. May be involved in regulating the maturation of sperm head nuclei. Alternatively proposed to be a paternally delivered transcription factor that may function in early zygotic gene activation. Increases the binding of CREM isoform Tau with CRE. The CREM isoform Tau-CREB3L4 heterodimer functions through CRE but not through UPRE and may recruit HIRA to CRE to regulate histone exchange. The protein is Cyclic AMP-responsive element-binding protein 3-like protein 4 (Creb3l4) of Mus musculus (Mouse).